Reading from the N-terminus, the 333-residue chain is Flap endonuclease 1 (333 aa).

The interval 1 to 99 (MGVAIRDILA…ETINERREHR (99 aa)) is N-domain. 7 residues coordinate Mg(2+): Asp-28, Asp-81, Glu-153, Glu-155, Asp-174, Asp-176, and Asp-235. Residues 117 to 255 (EAYKQASASA…KTALKIVRNG (139 aa)) are I-domain. The interaction with PCNA stretch occupies residues 325-333 (TQKTLDAWF).

The protein belongs to the XPG/RAD2 endonuclease family. FEN1 subfamily. In terms of assembly, interacts with PCNA. PCNA stimulates the nuclease activity without altering cleavage specificity. Mg(2+) serves as cofactor.

In terms of biological role, structure-specific nuclease with 5'-flap endonuclease and 5'-3' exonuclease activities involved in DNA replication and repair. During DNA replication, cleaves the 5'-overhanging flap structure that is generated by displacement synthesis when DNA polymerase encounters the 5'-end of a downstream Okazaki fragment. Binds the unpaired 3'-DNA end and kinks the DNA to facilitate 5' cleavage specificity. Cleaves one nucleotide into the double-stranded DNA from the junction in flap DNA, leaving a nick for ligation. Also involved in the base excision repair (BER) pathway. Acts as a genome stabilization factor that prevents flaps from equilibrating into structures that lead to duplications and deletions. Also possesses 5'-3' exonuclease activity on nicked or gapped double-stranded DNA. This chain is Flap endonuclease 1, found in Methanoculleus marisnigri (strain ATCC 35101 / DSM 1498 / JR1).